The sequence spans 226 residues: Ribonuclease HII (226 aa).

Residues 29–220 (GPVAGVDEAG…VAALLHRVDN (192 aa)) enclose the RNase H type-2 domain. The a divalent metal cation site is built by Asp-35, Glu-36, and Asp-129.

The protein belongs to the RNase HII family. Mn(2+) is required as a cofactor. The cofactor is Mg(2+).

It is found in the cytoplasm. It catalyses the reaction Endonucleolytic cleavage to 5'-phosphomonoester.. Functionally, endonuclease that specifically degrades the RNA of RNA-DNA hybrids. This Rhodococcus opacus (strain B4) protein is Ribonuclease HII.